The primary structure comprises 130 residues: Small ribosomal subunit protein uS11 (130 aa).

The protein belongs to the universal ribosomal protein uS11 family. Part of the 30S ribosomal subunit. Interacts with proteins S7 and S18. Binds to IF-3.

Located on the platform of the 30S subunit, it bridges several disparate RNA helices of the 16S rRNA. Forms part of the Shine-Dalgarno cleft in the 70S ribosome. The chain is Small ribosomal subunit protein uS11 from Ruegeria pomeroyi (strain ATCC 700808 / DSM 15171 / DSS-3) (Silicibacter pomeroyi).